Here is a 122-residue protein sequence, read N- to C-terminus: Basic phospholipase A2 PLA-B (122 aa).

7 cysteine pairs are disulfide-bonded: Cys-26–Cys-115, Cys-28–Cys-44, Cys-43–Cys-95, Cys-49–Cys-122, Cys-50–Cys-88, Cys-57–Cys-81, and Cys-75–Cys-86. Positions 27, 29, and 31 each coordinate Ca(2+). His-47 is a catalytic residue. Asp-48 contributes to the Ca(2+) binding site. Residue Asp-89 is part of the active site.

It belongs to the phospholipase A2 family. Group II subfamily. D49 sub-subfamily. Requires Ca(2+) as cofactor. As to expression, expressed by the venom gland.

It localises to the secreted. It catalyses the reaction a 1,2-diacyl-sn-glycero-3-phosphocholine + H2O = a 1-acyl-sn-glycero-3-phosphocholine + a fatty acid + H(+). In terms of biological role, snake venom phospholipase A2 (PLA2) that displays edema-inducing activities. PLA-B is three times more active than PLA-A in edema-inducing activities. PLA2 catalyzes the calcium-dependent hydrolysis of the 2-acyl groups in 3-sn-phosphoglycerides. The sequence is that of Basic phospholipase A2 PLA-B from Protobothrops flavoviridis (Habu).